We begin with the raw amino-acid sequence, 92 residues long: Large ribosomal subunit protein eL31 (92 aa).

It belongs to the eukaryotic ribosomal protein eL31 family.

This Halorubrum lacusprofundi (strain ATCC 49239 / DSM 5036 / JCM 8891 / ACAM 34) protein is Large ribosomal subunit protein eL31.